The following is a 443-amino-acid chain: GTPase Der (443 aa).

EngA-type G domains lie at P3–K167 and I176–Q349. GTP is bound by residues G9–S16, D56–L60, N119–D122, G182–S189, D229–I233, and N294–D297. Positions Q350–P434 constitute a KH-like domain.

The protein belongs to the TRAFAC class TrmE-Era-EngA-EngB-Septin-like GTPase superfamily. EngA (Der) GTPase family. As to quaternary structure, associates with the 50S ribosomal subunit.

In terms of biological role, GTPase that plays an essential role in the late steps of ribosome biogenesis. This chain is GTPase Der, found in Coxiella burnetii (strain CbuK_Q154) (Coxiella burnetii (strain Q154)).